The sequence spans 248 residues: Sulfur carrier protein FdhD (248 aa).

Catalysis depends on Cys99, which acts as the Cysteine persulfide intermediate. 232 to 237 (FVRGKR) provides a ligand contact to Mo-bis(molybdopterin guanine dinucleotide).

This sequence belongs to the FdhD family.

It localises to the cytoplasm. Functionally, required for formate dehydrogenase (FDH) activity. Acts as a sulfur carrier protein that transfers sulfur from IscS to the molybdenum cofactor prior to its insertion into FDH. The sequence is that of Sulfur carrier protein FdhD from Methanothermobacter thermautotrophicus (strain ATCC 29096 / DSM 1053 / JCM 10044 / NBRC 100330 / Delta H) (Methanobacterium thermoautotrophicum).